We begin with the raw amino-acid sequence, 95 residues long: Co-chaperonin GroES (95 aa).

Residues 12 to 22 (VKPSPAEEKTK) show a composition bias toward basic and acidic residues. Residues 12 to 38 (VKPSPAEEKTKGGLYIPDSGKEKPQHG) form a disordered region.

It belongs to the GroES chaperonin family. In terms of assembly, heptamer of 7 subunits arranged in a ring. Interacts with the chaperonin GroEL.

It is found in the cytoplasm. In terms of biological role, together with the chaperonin GroEL, plays an essential role in assisting protein folding. The GroEL-GroES system forms a nano-cage that allows encapsulation of the non-native substrate proteins and provides a physical environment optimized to promote and accelerate protein folding. GroES binds to the apical surface of the GroEL ring, thereby capping the opening of the GroEL channel. The sequence is that of Co-chaperonin GroES from Chloroherpeton thalassium (strain ATCC 35110 / GB-78).